We begin with the raw amino-acid sequence, 1003 residues long: Methyl-CpG-binding domain protein 6 (1003 aa).

Positions 11–81 constitute an MBD domain; that stretch reads DRAGGPVATS…KVFNFDPLAP (71 aa). The required for interaction with ASXL1/2/3 stretch occupies residues 57-68; it reads DGTCKCGLECPL. Disordered stretches follow at residues 120–219, 238–664, and 683–1003; these read TCSH…PPPA, VPSD…PLLF, and ATLD…KLAP. 2 stretches are compositionally biased toward pro residues: residues 140–155 and 268–287; these read PGPP…PPTT and TPPP…PASQ. Composition is skewed to low complexity over residues 297-308, 319-328, and 348-361; these read LPLVLGPLGGAP, LASSLLSAAA, and AQAP…SLRP. Residues 391-407 show a composition bias toward pro residues; the sequence is APAPVPQPFSLPEPSQP. Positions 408–426 are enriched in low complexity; that stretch reads ILPSVLSLLGLPTPGPSHS. Over residues 439-456 the composition is skewed to pro residues; that stretch reads LPPPPTLSSGSPPQPRHP. Low complexity-rich tracts occupy residues 460–498 and 531–548; these read SLPG…PSEG and GAGF…LSLG. Residues 570-589 show a composition bias toward pro residues; sequence QPPPEPLLPPPGGPGPPLAP. Low complexity predominate over residues 590 to 602; that stretch reads GEPEGPSLLVASL. Pro residues predominate over residues 603–617; it reads LPPPPSDLLPPPSAP. Positions 618 to 633 are enriched in low complexity; it reads PSNLLASFLPLLALGP. Positions 635–649 are enriched in gly residues; sequence AGDGEGSAEGAGGPS. The segment covering 650–662 has biased composition (low complexity); that stretch reads GEPFSGLGDLSPL. The segment covering 707–718 has biased composition (polar residues); that stretch reads TSSVTTATTDPG. 3 stretches are compositionally biased toward low complexity: residues 732 to 761, 768 to 778, and 788 to 798; these read PPQL…LPSL, LLSGQLGLQLL, and SEASSPLACLL. Residues 805-817 show a composition bias toward pro residues; it reads PEQPEAPCLPPES. Residues 818–837 are compositionally biased toward low complexity; the sequence is PASALEPEPARPPLSALAPP. Basic residues predominate over residues 947–958; it reads RKSRRGRRRKYN. Residues 959 to 969 show a composition bias toward polar residues; it reads PTRNSNSSRQD. Residues 989 to 1003 show a composition bias toward basic residues; sequence RPGRPAKNKRRKLAP.

Core component of the polycomb repressive deubiquitinase (PR-DUB) complex, at least composed of BAP1, one of ASXL1, ASXL2 or (probably) ASXL3, and one of MBD5 or MBD6. Distinct combinations of ASXL and MBD proteins may preferentially bind specific histone modification marks. The PR-DUB core associates with a number of accessory proteins, including FOXK1, FOXK2, KDM1B, HCFC1 and OGT; KDM1B specifically associates with ASXL2 PR-DUB complexes. Interacts (via MBD domain) with ASXL1, ASXL2 and ASXL3 (via PHD domain); the interaction is probably direct, mediates association with other PR-DUB complex core components.

It localises to the nucleus. Its subcellular location is the chromosome. Its function is as follows. Non-catalytic component of the polycomb repressive deubiquitinase (PR-DUB) complex, a complex that specifically mediates deubiquitination of histone H2A monoubiquitinated at 'Lys-120' (H2AK119ub1). Important for stability of PR-DUB components and stimulating its ubiquitinase activity. As part of the PR-DUB complex, associates with chromatin enriched in histone marks H3K4me1, H3K4me3, and H3K27Ac, but not in H3K27me3. MBD5 and MBD6 containing complexes associate with distinct chromatin regions enriched in genes involved in different pathways. Heterochromatin recruitment is not mediated by DNA methylation. The PR-DUB complex is an epigenetic regulator of gene expression, including genes involved in development, cell communication, signaling, cell proliferation and cell viability; may promote cancer cell growth. This is Methyl-CpG-binding domain protein 6 (MBD6) from Homo sapiens (Human).